Consider the following 332-residue polypeptide: Junctional sarcoplasmic reticulum protein 1 (332 aa).

A mediates interaction with CACNA1S region spans residues 1 to 80 (MTTRGLEDLD…EKELAGKEST (80 aa)). Disordered regions lie at residues 1–125 (MTTR…PWGD) and 159–332 (APHP…KGRD). A Phosphothreonine modification is found at Thr51. The segment covering 66-76 (GLKKMEKELAG) has biased composition (basic and acidic residues). 2 stretches are compositionally biased toward pro residues: residues 98–116 (QAPPPLQPPPPPLQPPPRT) and 177–197 (APKPPVLVSPSGSPQPKPGPP). Low complexity predominate over residues 221 to 232 (GGSISEASGEES). 2 positions are modified to phosphoserine: Ser223 and Ser228. Basic and acidic residues-rich tracts occupy residues 239-256 (GSQEKPRKEKPSKGEKLK) and 283-307 (RRWEAREGGRRPWGRDSRDLLEHGK).

Interacts with CACNA1S, CACNB1 and calsequestrin. In terms of tissue distribution, specifically expressed in skeletal muscle. Detected in skeletal muscle and tongue (at protein level).

The protein resides in the sarcoplasmic reticulum membrane. It localises to the endoplasmic reticulum membrane. Involved in skeletal muscle excitation/contraction coupling (EC), probably acting as a regulator of the voltage-sensitive calcium channel CACNA1S. EC is a physiological process whereby an electrical signal (depolarization of the plasma membrane) is converted into a chemical signal, a calcium gradient, by the opening of ryanodine receptor calcium release channels. May regulate CACNA1S membrane targeting and activity. This Mus musculus (Mouse) protein is Junctional sarcoplasmic reticulum protein 1 (Jsrp1).